A 360-amino-acid polypeptide reads, in one-letter code: GDSL esterase/lipase At2g31540 (360 aa).

The N-terminal stretch at 1–23 (MSTSKAITLTLFIATTLLAPCNA) is a signal peptide. Serine 42 functions as the Nucleophile in the catalytic mechanism. Asparagine 104 and asparagine 326 each carry an N-linked (GlcNAc...) asparagine glycan. Active-site residues include aspartate 334 and histidine 337.

This sequence belongs to the 'GDSL' lipolytic enzyme family.

The protein localises to the secreted. The polypeptide is GDSL esterase/lipase At2g31540 (Arabidopsis thaliana (Mouse-ear cress)).